We begin with the raw amino-acid sequence, 93 residues long: Protein IDA-LIKE 4 (93 aa).

An N-terminal signal peptide occupies residues 1 to 35 (MYPTRPHYWRRRLSINRPQAFLLLILCLFFIHHCD).

As to expression, expressed in mainly in buds. Lower levels in roots. Detected at the base of pedicel, in the floral and funicule abscission zones, in vascular tissues, in guard cells of young seedlings and in hydathodes.

Its subcellular location is the secreted. It is found in the extracellular space. May be involved in floral abscission. This is Protein IDA-LIKE 4 (IDL4) from Arabidopsis thaliana (Mouse-ear cress).